Consider the following 108-residue polypeptide: Protein phosphatase 1 regulatory subunit 1C (108 aa).

The disordered stretch occupies residues 25-108; sequence AEQIRKRRPT…ASEREEKWNH (84 aa). Basic and acidic residues predominate over residues 45 to 54; sequence NSPEIDEKRV. The segment covering 55–73 has biased composition (polar residues); sequence TNTQESQNASPKQRKQSVY. Residues 99-108 show a composition bias toward basic and acidic residues; the sequence is ASEREEKWNH.

Belongs to the protein phosphatase inhibitor 1 family.

It localises to the cytoplasm. Functionally, may increase cell susceptibility to TNF-induced apoptosis. The polypeptide is Protein phosphatase 1 regulatory subunit 1C (Ppp1r1c) (Mus musculus (Mouse)).